Reading from the N-terminus, the 864-residue chain is Translation initiation factor IF-2 (864 aa).

The segment covering 140-171 (DSRSLNTKKENKLKISNKDEQNKKFNQHRESN) has biased composition (basic and acidic residues). Residues 140 to 179 (DSRSLNTKKENKLKISNKDEQNKKFNQHRESNSFDLNHKK) are disordered. One can recognise a tr-type G domain in the interval 364-533 (IRAPVVTIMG…LLQAEMLELK (170 aa)). The segment at 373 to 380 (GHVDHGKT) is G1. 373 to 380 (GHVDHGKT) serves as a coordination point for GTP. Residues 398–402 (GITQN) are G2. A G3 region spans residues 419 to 422 (DTPG). Residues 419–423 (DTPGH) and 473–476 (NKID) contribute to the GTP site. Residues 473–476 (NKID) form a G4 region. Residues 509–511 (SAK) form a G5 region.

This sequence belongs to the TRAFAC class translation factor GTPase superfamily. Classic translation factor GTPase family. IF-2 subfamily.

The protein localises to the cytoplasm. One of the essential components for the initiation of protein synthesis. Protects formylmethionyl-tRNA from spontaneous hydrolysis and promotes its binding to the 30S ribosomal subunits. Also involved in the hydrolysis of GTP during the formation of the 70S ribosomal complex. This is Translation initiation factor IF-2 from Buchnera aphidicola subsp. Acyrthosiphon pisum (strain Tuc7).